The primary structure comprises 854 residues: Probable inactive serine/threonine-protein kinase DDB_G0274821 (854 aa).

Residues 1 to 266 enclose the Protein kinase domain; sequence MPIKESFKRI…WPKLFIHPFF (266 aa). Residues Asn-32 and Asn-106 are each glycosylated (N-linked (GlcNAc...) asparagine). The interval 116–135 is disordered; that stretch reads NNNNNNNNNNNNNNNNNNNN. N-linked (GlcNAc...) asparagine glycans are attached at residues Asn-163, Asn-279, Asn-283, and Asn-290. Residues 289 to 331 form a disordered region; that stretch reads LNKSSSSSSSSSSSSSSSSSSSSSSSLSFQQQQQPNNISSPNL. Low complexity predominate over residues 292 to 322; sequence SSSSSSSSSSSSSSSSSSSSSSSLSFQQQQQ. 3 N-linked (GlcNAc...) asparagine glycosylation sites follow: Asn-325, Asn-347, and Asn-365. Residues 384–408 form a disordered region; it reads IISPNRPSSPPLSSLSSCSSSSSSS. Asn-414 carries N-linked (GlcNAc...) asparagine glycosylation. The segment at 425–446 is disordered; the sequence is NNNNNNNNNNNNNNNNNNNNNN. 3 N-linked (GlcNAc...) asparagine glycosylation sites follow: Asn-520, Asn-541, and Asn-620. The interval 627-650 is disordered; the sequence is SSPPPSSSSSSSSPSSPSSTSPSL. Residues 633–650 are compositionally biased toward low complexity; sequence SSSSSSSPSSPSSTSPSL. Residue Asn-757 is glycosylated (N-linked (GlcNAc...) asparagine). The chain crosses the membrane as a helical span at residues 770-792; the sequence is HWRVQISFLNILFILITINNNFI.

It belongs to the protein kinase superfamily. Ser/Thr protein kinase family.

It is found in the membrane. The protein is Probable inactive serine/threonine-protein kinase DDB_G0274821 of Dictyostelium discoideum (Social amoeba).